A 158-amino-acid chain; its full sequence is Large ribosomal subunit protein uL23 (158 aa).

The disordered stretch occupies residues 1 to 43; it reads MPPKSSTKAEPKASSAKTQVAKAKSAKKAVVKGTSSKTQRRIR. A compositionally biased stretch (low complexity) spans 12 to 23; sequence KASSAKTQVAKA.

Belongs to the universal ribosomal protein uL23 family.

Its function is as follows. This protein binds to a specific region on the 26S rRNA. This is Large ribosomal subunit protein uL23 from Puccinia graminis (Black stem rust fungus).